We begin with the raw amino-acid sequence, 368 residues long: Polymerase delta-interacting protein 2 (368 aa).

The N-terminal 51 residues, 1–51 (MAACTARRALAVGSRWWSRSLTGARWPRPLCAAAGAGAFSPASTTTTRRHL), are a transit peptide targeting the mitochondrion. The 126-residue stretch at 235–360 (RETTENIRVT…FSLESNKDEK (126 aa)) folds into the ApaG domain. Thr-292 bears the Phosphothreonine mark.

Interacts with PCNA and POLD2. Interacts with SSBP1. Interacts with PRIMPOL; leading to enhance DNA polymerase activity of PRIMPOL. Interacts with POLH. Interacts with POLD1; leading to stimulate DNA polymerase activity of POLD1.

It localises to the mitochondrion matrix. The protein resides in the nucleus. Its function is as follows. Involved in DNA damage tolerance by regulating translesion synthesis (TLS) of templates carrying DNA damage lesions such as 8oxoG and abasic sites. May act by stimulating activity of DNA polymerases involved in TLS, such as PRIMPOL and polymerase delta (POLD1). This Homo sapiens (Human) protein is Polymerase delta-interacting protein 2.